The following is a 148-amino-acid chain: MKVILKENLENLGHIGDIVKVAPGYARNYLLPRGYATEATEKNAKALEHAKRQLEYKRNKVLEQAKGLAAKIEGLTIAITHQAGEEGKLFGAVTNMELAEHLKAQGVEIDRKKIVLAEPIKHVGEYTASVKVHPEVAAALKVVITKAD.

The protein belongs to the bacterial ribosomal protein bL9 family.

In terms of biological role, binds to the 23S rRNA. This is Large ribosomal subunit protein bL9 from Geobacter metallireducens (strain ATCC 53774 / DSM 7210 / GS-15).